We begin with the raw amino-acid sequence, 643 residues long: Pesticidal crystal protein Cry11Aa (643 aa).

It belongs to the delta endotoxin family.

Its function is as follows. Promotes colloidosmotic lysis by binding to the midgut epithelial cells of mosquitos. In Bacillus thuringiensis subsp. israelensis, this protein is Pesticidal crystal protein Cry11Aa (cry11Aa).